A 232-amino-acid polypeptide reads, in one-letter code: Acyl-protein thioesterase 1 (232 aa).

Catalysis depends on charge relay system residues serine 125, aspartate 179, and histidine 212.

Belongs to the AB hydrolase superfamily. AB hydrolase 2 family.

Its subcellular location is the cytoplasm. The protein resides in the nucleus. The enzyme catalyses S-hexadecanoyl-L-cysteinyl-[protein] + H2O = L-cysteinyl-[protein] + hexadecanoate + H(+). In terms of biological role, hydrolyzes fatty acids from S-acylated cysteine residues in proteins with a strong preference for palmitoylated G-alpha proteins over other acyl substrates. Mediates the deacylation of G-alpha proteins such as GPA1 in vivo, but has weak or no activity toward palmitoylated Ras proteins. Has weak lysophospholipase activity in vitro; however such activity may not exist in vivo. The polypeptide is Acyl-protein thioesterase 1 (Debaryomyces hansenii (strain ATCC 36239 / CBS 767 / BCRC 21394 / JCM 1990 / NBRC 0083 / IGC 2968) (Yeast)).